A 424-amino-acid chain; its full sequence is Glutamyl-tRNA reductase (424 aa).

Substrate-binding positions include 51 to 54 (TCNR), serine 99, 104 to 106 (EDQ), and glutamine 110. Cysteine 52 acts as the Nucleophile in catalysis. Residue 179–184 (GGGEMG) participates in NADP(+) binding.

This sequence belongs to the glutamyl-tRNA reductase family. As to quaternary structure, homodimer.

It catalyses the reaction (S)-4-amino-5-oxopentanoate + tRNA(Glu) + NADP(+) = L-glutamyl-tRNA(Glu) + NADPH + H(+). The protein operates within porphyrin-containing compound metabolism; protoporphyrin-IX biosynthesis; 5-aminolevulinate from L-glutamyl-tRNA(Glu): step 1/2. Catalyzes the NADPH-dependent reduction of glutamyl-tRNA(Glu) to glutamate 1-semialdehyde (GSA). This Methanocorpusculum labreanum (strain ATCC 43576 / DSM 4855 / Z) protein is Glutamyl-tRNA reductase.